We begin with the raw amino-acid sequence, 540 residues long: Zinc finger protein 768 (540 aa).

2 disordered regions span residues 1 to 166 (MERE…FEAQ) and 239 to 258 (TGALRGPGRRGGRARGGQGP). 3 positions are modified to phosphoserine: S17, S18, and S23. Y27 carries the post-translational modification Phosphotyrosine. S33 carries the post-translational modification Phosphoserine. Over residues 34–53 (ENEEEEISQQEGSGDYEVEE) the composition is skewed to acidic residues. Phosphoserine occurs at positions 62, 69, 76, 83, 90, 97, 104, 107, 111, 118, and 125. Low complexity predominate over residues 62–77 (SPGFEPQSPEFEPQSP). The span at 107–119 (SDSQSPEFESQSP) shows a compositional bias: polar residues. Y128 carries the phosphotyrosine modification. Phosphoserine is present on S132. At Y135 the chain carries Phosphotyrosine. A Phosphoserine modification is found at S139. At Y142 the chain carries Phosphotyrosine. Phosphoserine is present on residues S144 and S147. Residues 149–166 (YESQNTELKTQSPEFEAQ) show a composition bias toward polar residues. T158 is subject to Phosphothreonine. Phosphoserine is present on S160. The segment at 261-283 (NICGICGKSFGRGSTLIQHQRIH) adopts a C2H2-type 1 zinc-finger fold. Residue T284 is modified to Phosphothreonine. Y289 is subject to Phosphotyrosine. 4 consecutive C2H2-type zinc fingers follow at residues 289–311 (YKCEVCSKAFSQSSDLIKHQRTH), 317–339 (YKCPRCGKAFADSSYLLRHQRTH), 345–367 (YKCPHCGKAFGDSSYLLRHQRTH), and 373–395 (YSCTECGKCYSQNSSLRSHQRVH). S295 and S299 each carry phosphoserine. A Phosphothreonine modification is found at T396. 5 C2H2-type zinc fingers span residues 401 to 423 (FSCGICGKSFSQRSALIPHARSH), 429 to 451 (FKCPECGKRFGQSSVLAIHARTH), 457 to 479 (YSCPDCGKTFNRSSTLIQHQRSH), 485 to 507 (YRCAVCGKGFCRSSTLLQHHRVH), and 513 to 535 (YKCDDCGKAFSQSSDLIRHQRTH). Position 442 is a phosphoserine (S442).

The protein belongs to the krueppel C2H2-type zinc-finger protein family. As to quaternary structure, interacts (via zinc-finger domains) with TP53 (via N-terminus); interaction might be facilitated by TP53 oligomerization state. Interacts with ELP3. Post-translationally, may be phosphorylated at residue 'Ser-5' of the tandem heptapeptide repeats in the N-terminus. Phosphorylation might be increased upon RAS pathway activation and negatively regulate protein stability.

It is found in the nucleus. The protein resides in the chromosome. In terms of biological role, binds to mammalian-wide interspersed repeat (MIRs) sequences in euchromatin and promoter regions of genes at the consensus sequence 5'-GCTGTGTG-[N20]-CCTCTCTG-3', consisting of two anchor regions connected by a linker region; the linker region probably does not contribute to the binding specificity. Required for cell homeostasis. May be involved in transcriptional regulation. In Homo sapiens (Human), this protein is Zinc finger protein 768 (ZNF768).